An 83-amino-acid polypeptide reads, in one-letter code: U20-theraphotoxin-Cg1a 1 (83 aa).

A signal peptide spans 1–21 (MKVSVLITLAVLGVMFVWTSA). Residues 22–47 (AELEERGSDQPAWLKSLERIFQSEER) constitute a propeptide that is removed on maturation. Disulfide bonds link Cys49–Cys63, Cys56–Cys68, and Cys62–Cys76.

The protein belongs to the neurotoxin 10 (Hwtx-1) family. 40 (Jztx-35) subfamily. Expressed by the venom gland.

Its subcellular location is the secreted. Functionally, probable ion channel inhibitor. The polypeptide is U20-theraphotoxin-Cg1a 1 (Chilobrachys guangxiensis (Chinese earth tiger tarantula)).